A 208-amino-acid polypeptide reads, in one-letter code: Large ribosomal subunit protein eL13 (208 aa).

This sequence belongs to the eukaryotic ribosomal protein eL13 family.

The polypeptide is Large ribosomal subunit protein eL13 (RPL13) (Chlamydomonas sp. (strain W80)).